The following is a 282-amino-acid chain: Serine/arginine-rich splicing factor 8 (282 aa).

An N-acetylserine modification is found at Ser-2. Phosphoserine is present on residues Ser-2 and Ser-26. The 79-residue stretch at 14 to 92 (ITLKVDNLTY…RELRVQVARY (79 aa)) folds into the RRM domain. The segment at 91 to 282 (RYGRRDLPRS…SPEEEGQMSS (192 aa)) is disordered. Basic and acidic residues predominate over residues 93-107 (GRRDLPRSRQGEPRG). Composition is skewed to basic residues over residues 116-136 (RRSR…RSRS) and 144-154 (SRSRSRYRGSR). 2 stretches are compositionally biased toward low complexity: residues 155 to 177 (YSRS…PYSR) and 185 to 200 (YGGS…NSRY). 5 positions are modified to phosphoserine: Ser-156, Ser-158, Ser-171, Ser-173, and Ser-196. Residues 201–210 (SRYHSSRSHS) show a composition bias toward basic residues. 2 stretches are compositionally biased toward low complexity: residues 211–227 (KSGS…SKSS) and 234–255 (SSSV…SPPR). Over residues 256–271 (VSKRKSKSRSRSKRPP) the composition is skewed to basic residues. Ser-273 is modified (phosphoserine).

This sequence belongs to the splicing factor SR family. As to expression, strongly expressed in pancreas, spleen and prostate. Weakly expressed in lung, liver and thymus.

The protein localises to the nucleus. Functionally, involved in pre-mRNA alternative splicing. This Homo sapiens (Human) protein is Serine/arginine-rich splicing factor 8 (SRSF8).